The following is a 311-amino-acid chain: Olfactory receptor 1D4 (311 aa).

Residues 1 to 25 (MDGDNQSENSQFLLLGISESPEQQQ) lie on the Extracellular side of the membrane. N-linked (GlcNAc...) asparagine glycosylation is present at Asn5. Residues 26–49 (ILFWMFLSMYLVTVLGNVLIILAI) form a helical membrane-spanning segment. Residues 50–57 (SSDSHLHT) lie on the Cytoplasmic side of the membrane. A helical membrane pass occupies residues 58-79 (PMYFFLANLSFTDLFFVTNTIP). At 80–100 (KMLVNFQSQNKAISYAGCLTQ) the chain is on the extracellular side. Cys97 and Cys189 form a disulfide bridge. The helical transmembrane segment at 101–120 (LYFLVSLVTLDNLILAVMAY) threads the bilayer. Residues 121-140 (DRYVAICCPLHYVTAMSPGL) lie on the Cytoplasmic side of the membrane. Residues 141-158 (CVLLLSLCWGLSVLYGLL) traverse the membrane as a helical segment. The Extracellular portion of the chain corresponds to 159–196 (LTFLLTRVTFCGPREIHYLFCDMYILLWLACSNTHIIH). Residues 197–220 (TALIATGCFIFLTLLGFMTTSYVR) form a helical membrane-spanning segment. At 221 to 237 (IVRTILQMPSASKKYKT) the chain is on the cytoplasmic side. A helical membrane pass occupies residues 238 to 260 (FSTCASHLGVVSLFYGTLAMVYL). Topologically, residues 261 to 271 (QPLHTYSMKDS) are extracellular. Residues 272–291 (VATVMYAVLTPMMNPFIYSL) form a helical membrane-spanning segment. At 292–311 (RNKDMHGAPGRVLWRPFQRP) the chain is on the cytoplasmic side.

Belongs to the G-protein coupled receptor 1 family.

It localises to the cell membrane. In terms of biological role, odorant receptor. This is Olfactory receptor 1D4 (OR1D4) from Homo sapiens (Human).